The chain runs to 676 residues: DNA ligase (676 aa).

Basic and acidic residues predominate over residues 1–10 (MTQAHHDDAG). The interval 1–23 (MTQAHHDDAGARNALQGGLATDP) is disordered. NAD(+)-binding positions include 52 to 56 (DAAFD) and 95 to 96 (SL). Residue K148 is the N6-AMP-lysine intermediate of the active site. Positions 169, 203, and 330 each coordinate NAD(+). Zn(2+) contacts are provided by C420, C423, C436, and C441. The 84-residue stretch at 593–676 (EAEGPLAGLT…DKLIAERRGG (84 aa)) folds into the BRCT domain.

Belongs to the NAD-dependent DNA ligase family. LigA subfamily. Requires Mg(2+) as cofactor. Mn(2+) serves as cofactor.

It catalyses the reaction NAD(+) + (deoxyribonucleotide)n-3'-hydroxyl + 5'-phospho-(deoxyribonucleotide)m = (deoxyribonucleotide)n+m + AMP + beta-nicotinamide D-nucleotide.. Its function is as follows. DNA ligase that catalyzes the formation of phosphodiester linkages between 5'-phosphoryl and 3'-hydroxyl groups in double-stranded DNA using NAD as a coenzyme and as the energy source for the reaction. It is essential for DNA replication and repair of damaged DNA. In Sorangium cellulosum (strain So ce56) (Polyangium cellulosum (strain So ce56)), this protein is DNA ligase.